We begin with the raw amino-acid sequence, 410 residues long: F-box protein At5g36730 (410 aa).

The F-box domain maps to methionine 1–leucine 46.

The protein is F-box protein At5g36730 of Arabidopsis thaliana (Mouse-ear cress).